Reading from the N-terminus, the 546-residue chain is ATP synthase subunit alpha (546 aa).

173 to 180 (GDRQTGKT) serves as a coordination point for ATP. The tract at residues 520 to 546 (VDKKTAPKSVTPVDQEQIKAGKAQEKK) is disordered. Basic and acidic residues predominate over residues 535–546 (EQIKAGKAQEKK).

It belongs to the ATPase alpha/beta chains family. As to quaternary structure, F-type ATPases have 2 components, CF(1) - the catalytic core - and CF(0) - the membrane proton channel. CF(1) has five subunits: alpha(3), beta(3), gamma(1), delta(1), epsilon(1). CF(0) has three main subunits: a(1), b(2) and c(9-12). The alpha and beta chains form an alternating ring which encloses part of the gamma chain. CF(1) is attached to CF(0) by a central stalk formed by the gamma and epsilon chains, while a peripheral stalk is formed by the delta and b chains.

It is found in the cell membrane. It carries out the reaction ATP + H2O + 4 H(+)(in) = ADP + phosphate + 5 H(+)(out). Produces ATP from ADP in the presence of a proton gradient across the membrane. The alpha chain is a regulatory subunit. This is ATP synthase subunit alpha from Bifidobacterium animalis subsp. lactis (strain AD011).